Consider the following 161-residue polypeptide: Peptidyl-prolyl cis-trans isomerase-like 3 (161 aa).

The residue at position 2 (Ser-2) is an N-acetylserine. The PPIase cyclophilin-type domain maps to Ser-2 to Ile-154. The residue at position 61 (Arg-61) is an Omega-N-methylarginine.

Belongs to the cyclophilin-type PPIase family. PPIL3 subfamily. In terms of assembly, identified in the spliceosome C complex. Ubiquitous. Detected at low levels.

It catalyses the reaction [protein]-peptidylproline (omega=180) = [protein]-peptidylproline (omega=0). In terms of biological role, PPIases accelerate the folding of proteins. It catalyzes the cis-trans isomerization of proline imidic peptide bonds in oligopeptides. May be involved in pre-mRNA splicing. This Homo sapiens (Human) protein is Peptidyl-prolyl cis-trans isomerase-like 3 (PPIL3).